The sequence spans 507 residues: MVTIRADEISNIIRERIEQYNREVKIVNTGTVLQVGDGIARIHGLDEVMAGELVEFEEGTVGIALNLESNNVGVVLMGDGLLIQEGSSVKATGRIAQIPVSEAYLGRVVNALAKPIDGRGEISASEYRLIESPAPGIISRRSVYEPLQTGLIAIDSMIPIGRGQRELIIGDRQTGKTAVATDTILNQQGQNVICVYVAIGQKASSVAQVVTTFQERGAMEYTIVVAEMADSPATLQYLAPYTGAALAEYFMYRERHTSIIYDDPSKQAQAYRQMSLLLRRPPGREAYPGDVFYLHSRLLERAAKLSSRLGEGSMTALPIVETQSGDVSAYIPTNVISITDGQIFLSADLFNAGIRPAINVGISVSRVGSAAQIKAMKQVAGKLKLELAQFAELEAFAQFASDLDKATQNQLARGQRLRELLKQSQSAPLTVEEQIMTIYTGTNGYLDLLEIGQVRKFLVELRTYLKTNKPKFQEIISSTKTFTEEAEALLKEAIQEQTDRFILQEQA.

ATP is bound at residue 170–177 (GDRQTGKT).

The protein belongs to the ATPase alpha/beta chains family. F-type ATPases have 2 components, CF(1) - the catalytic core - and CF(0) - the membrane proton channel. CF(1) has five subunits: alpha(3), beta(3), gamma(1), delta(1), epsilon(1). CF(0) has four main subunits: a, b, b' and c.

Its subcellular location is the plastid. It localises to the chloroplast thylakoid membrane. It catalyses the reaction ATP + H2O + 4 H(+)(in) = ADP + phosphate + 5 H(+)(out). Its function is as follows. Produces ATP from ADP in the presence of a proton gradient across the membrane. The alpha chain is a regulatory subunit. The protein is ATP synthase subunit alpha, chloroplastic of Panax ginseng (Korean ginseng).